The following is a 307-amino-acid chain: Nitric oxide synthase-interacting protein homolog (307 aa).

A disordered region spans residues Pro-120–Asn-159. Low complexity predominate over residues Ser-127–Ser-155.

Belongs to the NOSIP family.

The protein localises to the cytoplasm. It is found in the nucleus. In terms of biological role, negatively regulates nitric oxide production by inducing nitric oxide synthase translocation to actin cytoskeleton and inhibiting its enzymatic activity. The chain is Nitric oxide synthase-interacting protein homolog from Drosophila melanogaster (Fruit fly).